The sequence spans 453 residues: Ethanolamine ammonia-lyase large subunit (453 aa).

Substrate-binding positions include 160–162 (RLQ) and asparagine 193. Positions 194 and 246 each coordinate adenosylcob(III)alamin. Glutamate 287 provides a ligand contact to substrate. Adenosylcob(III)alamin is bound at residue serine 295. Substrate is bound at residue aspartate 362. Methionine 401 provides a ligand contact to adenosylcob(III)alamin.

The protein belongs to the EutB family. The basic unit is a heterodimer which dimerizes to form tetramers. The heterotetramers trimerize; 6 large subunits form a core ring with 6 small subunits projecting outwards. Requires adenosylcob(III)alamin as cofactor.

It is found in the bacterial microcompartment. The enzyme catalyses ethanolamine = acetaldehyde + NH4(+). The protein operates within amine and polyamine degradation; ethanolamine degradation. Catalyzes the deamination of various vicinal amino-alcohols to oxo compounds. It is spontaneously inactivated by its substrate and reactivated by EutA. May play a role in BMC assembly or maintenance. In terms of biological role, expression of the eut operon allows this bacteria to use ethanolamine (EA) as a carbon, nitrogen and energy source. It relies on cobalamin (vitamin B12) both as a cofactor for the ethanolamine ammonia-lyase activity and to induce the operon. EA enhances bacterial survival in macrophages in a concentration-dependent manner, suggesting it is an important nutrient during infection. This chain is Ethanolamine ammonia-lyase large subunit, found in Salmonella typhimurium (strain LT2 / SGSC1412 / ATCC 700720).